We begin with the raw amino-acid sequence, 261 residues long: Imidazole glycerol phosphate synthase subunit HisF (261 aa).

Residues Asp-11 and Asp-130 contribute to the active site.

The protein belongs to the HisA/HisF family. In terms of assembly, heterodimer of HisH and HisF.

The protein resides in the cytoplasm. It carries out the reaction 5-[(5-phospho-1-deoxy-D-ribulos-1-ylimino)methylamino]-1-(5-phospho-beta-D-ribosyl)imidazole-4-carboxamide + L-glutamine = D-erythro-1-(imidazol-4-yl)glycerol 3-phosphate + 5-amino-1-(5-phospho-beta-D-ribosyl)imidazole-4-carboxamide + L-glutamate + H(+). It functions in the pathway amino-acid biosynthesis; L-histidine biosynthesis; L-histidine from 5-phospho-alpha-D-ribose 1-diphosphate: step 5/9. Its function is as follows. IGPS catalyzes the conversion of PRFAR and glutamine to IGP, AICAR and glutamate. The HisF subunit catalyzes the cyclization activity that produces IGP and AICAR from PRFAR using the ammonia provided by the HisH subunit. This Jannaschia sp. (strain CCS1) protein is Imidazole glycerol phosphate synthase subunit HisF.